Reading from the N-terminus, the 226-residue chain is Thymidylate kinase (226 aa).

Residue 20 to 27 (GGEGAGKS) participates in ATP binding.

It belongs to the thymidylate kinase family.

The catalysed reaction is dTMP + ATP = dTDP + ADP. Its function is as follows. Phosphorylation of dTMP to form dTDP in both de novo and salvage pathways of dTTP synthesis. This Bradyrhizobium sp. (strain BTAi1 / ATCC BAA-1182) protein is Thymidylate kinase.